Here is a 1648-residue protein sequence, read N- to C-terminus: AT-rich interactive domain-containing protein arid-1 (1648 aa).

Disordered regions lie at residues 150-270 (ISEA…PVIN) and 284-307 (RKLE…EEKL). Composition is skewed to acidic residues over residues 166–193 (DDDE…DTEE), 219–228 (TQSEESSADS), and 251–260 (SDEEDQEDLA). The span at 261–270 (TTDSENPVIN) shows a compositional bias: polar residues. Positions 655–745 (AETKDLFVAM…FLESYLAINT (91 aa)) constitute an ARID domain. Disordered stretches follow at residues 763 to 935 (VLPG…KEDT), 1095 to 1563 (SEKR…KPHD), and 1628 to 1648 (KTAS…TPRP). Positions 848-860 (SDDVTDVPDDMTD) are enriched in acidic residues. Basic and acidic residues-rich tracts occupy residues 861–878 (HEDL…ERKS) and 925–935 (SEGRGPRKEDT). Acidic residues-rich tracts occupy residues 1102–1112 (DDDESSDSDTD) and 1145–1154 (GDEEAEEEVK). Over residues 1165-1185 (QESPPTTSQGTTTPETAATGG) the composition is skewed to low complexity. Over residues 1195–1208 (YPPVPEELVPPPPV) the composition is skewed to pro residues. Positions 1213 to 1251 (FPSTDRFSSGGSSNYPTLSRQGSINSMASPMFSPNSDLS) are enriched in polar residues. Residues 1313–1326 (RASERSIDSASEHH) show a composition bias toward basic and acidic residues. Residues 1348-1357 (ISTTQPTDTS) show a composition bias toward polar residues. Residues 1377 to 1392 (ASPTLLTSGPLTLSSS) are compositionally biased toward low complexity. Residues 1393–1404 (APPPPPASPAPP) are compositionally biased toward pro residues. 2 stretches are compositionally biased toward low complexity: residues 1474 to 1486 (STTT…PKSI) and 1531 to 1541 (TPTTMTTSTPT). Positions 1542 to 1551 (RADSFQTQKN) are enriched in polar residues.

It is found in the nucleus. DNA-binding protein which modulates activity of several transcription factors. Plays a role in the modulation of endoplasmic reticulum (ER) homeostasis during chemical and pathogen stress, including exposure to the Gram-negative bacterium P.aeruginosa. The sequence is that of AT-rich interactive domain-containing protein arid-1 from Caenorhabditis elegans.